The chain runs to 161 residues: MORN repeat-containing protein 5 (161 aa).

MORN repeat units lie at residues 8-30, 31-53, and 54-75; these read YIGE…TETI, YVGE…SGSQ, and YDAI…DGLH.

In terms of tissue distribution, expressed in sperm (at protein level).

It localises to the cell projection. It is found in the cilium. The protein localises to the flagellum. This is MORN repeat-containing protein 5 (MORN5) from Homo sapiens (Human).